The following is a 508-amino-acid chain: Photosystem II CP47 reaction center protein (508 aa).

6 consecutive transmembrane segments (helical) span residues 21-36, 101-115, 140-156, 203-218, 237-252, and 457-472; these read AVHIMHTALVAGWAGS, IVFSGLCFLSAIWHW, GIHLFLSGVACFGFGAF, IAAGLLGIIAGLFHLS, VLSSSIAAVFFAAFIV, and TFALLFFFGHIWHGAR.

The protein belongs to the PsbB/PsbC family. PsbB subfamily. As to quaternary structure, PSII is composed of 1 copy each of membrane proteins PsbA, PsbB, PsbC, PsbD, PsbE, PsbF, PsbH, PsbI, PsbJ, PsbK, PsbL, PsbM, PsbT, PsbX, PsbY, PsbZ, Psb30/Ycf12, at least 3 peripheral proteins of the oxygen-evolving complex and a large number of cofactors. It forms dimeric complexes. The cofactor is Binds multiple chlorophylls. PSII binds additional chlorophylls, carotenoids and specific lipids..

It is found in the plastid. The protein resides in the chloroplast thylakoid membrane. In terms of biological role, one of the components of the core complex of photosystem II (PSII). It binds chlorophyll and helps catalyze the primary light-induced photochemical processes of PSII. PSII is a light-driven water:plastoquinone oxidoreductase, using light energy to abstract electrons from H(2)O, generating O(2) and a proton gradient subsequently used for ATP formation. The polypeptide is Photosystem II CP47 reaction center protein (Gnetum parvifolium (Small-leaved jointfir)).